We begin with the raw amino-acid sequence, 606 residues long: NADH-ubiquinone oxidoreductase chain 5 (606 aa).

A run of 16 helical transmembrane segments spans residues Phe-4 to Phe-24, Ala-43 to Ile-63, Phe-84 to Ser-104, Ile-114 to Ala-134, Leu-140 to Gly-160, Ala-171 to Ile-191, Leu-213 to Leu-233, Thr-241 to Ile-261, Phe-272 to Ala-292, Ile-301 to Asn-320, Ala-325 to Ile-347, Met-366 to Leu-386, Leu-413 to Gly-433, Leu-457 to Ile-477, Tyr-485 to Ser-505, and Gly-582 to Leu-602.

The protein belongs to the complex I subunit 5 family. As to quaternary structure, core subunit of respiratory chain NADH dehydrogenase (Complex I) which is composed of 45 different subunits.

It localises to the mitochondrion inner membrane. The catalysed reaction is a ubiquinone + NADH + 5 H(+)(in) = a ubiquinol + NAD(+) + 4 H(+)(out). Its function is as follows. Core subunit of the mitochondrial membrane respiratory chain NADH dehydrogenase (Complex I) which catalyzes electron transfer from NADH through the respiratory chain, using ubiquinone as an electron acceptor. Essential for the catalytic activity and assembly of complex I. This Ovis aries (Sheep) protein is NADH-ubiquinone oxidoreductase chain 5 (MT-ND5).